The sequence spans 312 residues: Olfactory receptor 2M7 (312 aa).

At 1 to 25 (MAWENQTFNSDFLLLGIFNHSPTHT) the chain is on the extracellular side. Asparagine 5 carries an N-linked (GlcNAc...) asparagine glycan. The chain crosses the membrane as a helical span at residues 26 to 49 (FLFFLVLAIFSVAFMGNSIMVLLI). Residues 50–57 (YLDTQLHT) lie on the Cytoplasmic side of the membrane. A helical transmembrane segment spans residues 58-79 (PMYFLLSQLSLMDLMLICTTVP). The Extracellular portion of the chain corresponds to 80-100 (KMAFNYLSGSKSISMAGCATQ). Cysteine 97 and cysteine 189 are oxidised to a cystine. A helical transmembrane segment spans residues 101–120 (IFFYISLLGSECFLLAVMSY). Over 121 to 139 (DRYTAICHPLRYTNLMRPK) the chain is Cytoplasmic. A helical transmembrane segment spans residues 140–158 (ICGLMTAFSWILGSTDGII). The Extracellular segment spans residues 159–195 (DAVATFSFSYCGSREIAHFCCDFPSLLILSCNDTSIF). A helical transmembrane segment spans residues 196-219 (EEVIFICCIVMLVFPVAIIITSYA). At 220-236 (RVILAVIHMGSGEGRRK) the chain is on the cytoplasmic side. The helical transmembrane segment at 237-259 (AFTTCSSHLMVVGMYYGAGLFMC) threads the bilayer. Residues 260–272 (IQPTSHHSPMQDK) lie on the Extracellular side of the membrane. The chain crosses the membrane as a helical span at residues 273–292 (MVSVFYTIVTPMLNPLIYSL). At 293-311 (RNKEVTRALMKILGKGKSG) the chain is on the cytoplasmic side.

The protein belongs to the G-protein coupled receptor 1 family.

The protein localises to the cell membrane. Odorant receptor. The protein is Olfactory receptor 2M7 (OR2M7) of Homo sapiens (Human).